A 512-amino-acid chain; its full sequence is Vacuolar protein sorting-associated protein 30 (512 aa).

The BARA stretch occupies residues 294–511; sequence TNIYNESFRI…LVFCSSKLSL (218 aa).

The protein belongs to the beclin family. In terms of assembly, component of the autophagy-specific VPS34 PI3-kinase complex I composed of VPS15, VPS30, VPS34, ATG14 and ATG38; and of the VPS34 PI3-kinase complex II composed of VPS15, VPS30, VPS34 and VPS38.

The protein localises to the endosome membrane. The protein resides in the vacuole membrane. It localises to the preautophagosomal structure membrane. Functionally, required for cytoplasm to vacuole transport (Cvt), autophagy, nucleophagy, and mitophagy, as a part of the autophagy-specific VPS34 PI3-kinase complex I. This complex is essential to recruit the ATG8-phosphatidylinositol conjugate and the ATG12-ATG5 conjugate to the pre-autophagosomal structure. Also involved in endosome-to-Golgi retrograde transport as part of the VPS34 PI3-kinase complex II. This second complex is required for the endosome-to-Golgi retrieval of PEP1 and KEX2, and the recruitment of VPS5 and VPS7, two components of the retromer complex, to endosomal membranes (probably through the synthesis of a specific pool of phosphatidylinositol 3-phosphate recruiting the retromer to the endosomes). Required for survival and/or proliferation in kidneys but not brain. This Candida glabrata (strain ATCC 2001 / BCRC 20586 / JCM 3761 / NBRC 0622 / NRRL Y-65 / CBS 138) (Yeast) protein is Vacuolar protein sorting-associated protein 30.